A 453-amino-acid polypeptide reads, in one-letter code: Ribosome biogenesis protein SSF1 (453 aa).

The segment covering 1–11 (MAKRRQKKRTH) has biased composition (basic residues). Disordered regions lie at residues 1-22 (MAKR…EQGI), 275-324 (KAKH…PRKK), and 374-453 (KMRL…SEVE). Positions 26 to 348 (MVIRVGQTSL…LVKIEEGICS (323 aa)) constitute a Brix domain. Positions 288–300 (PVEKKDNKEREKE) are enriched in basic and acidic residues. Threonine 301 carries the post-translational modification Phosphothreonine. The segment covering 374–398 (KMRLKEQRKKEQEENIAKKKAVKDA) has biased composition (basic and acidic residues). Positions 399-409 (KKQRKLERRKA) are enriched in basic residues. A compositionally biased stretch (basic and acidic residues) spans 410–423 (RAAEGGEGQGKDDA). Residues 442-453 (EDLDSDLFSEVE) show a composition bias toward acidic residues.

Part of a complex that includes BRX1, RPF1, RPF2 and SSF1 or SSF2.

The protein localises to the nucleus. Its subcellular location is the nucleolus. Its function is as follows. Required for biogenesis of the 60S ribosomal subunit. The protein is Ribosome biogenesis protein SSF1 (SSF1) of Saccharomyces cerevisiae (strain ATCC 204508 / S288c) (Baker's yeast).